The chain runs to 76 residues: Conotoxin TxMEKL-011 (76 aa).

The N-terminal stretch at 1–19 (MEKLTILLLVAAVLMSTQA) is a signal peptide. Positions 20–45 (LVERAGENRSKENIKFLLKRKRAADR) are excised as a propeptide. 3 disulfide bridges follow: Cys-51/Cys-65, Cys-58/Cys-69, and Cys-64/Cys-73.

It belongs to the conotoxin O2 superfamily. Expressed by the venom duct.

The protein resides in the secreted. The sequence is that of Conotoxin TxMEKL-011 from Conus textile (Cloth-of-gold cone).